The primary structure comprises 361 residues: Polyribonucleotide 5'-hydroxyl-kinase MJ1315 (361 aa).

39 to 46 contacts ATP; the sequence is GGVDSGKT.

A divalent metal cation serves as cofactor.

The catalysed reaction is a 5'-end dephospho-2'-deoxyribonucleoside-DNA + ATP = a 5'-end 5'-phospho-2'-deoxyribonucleoside-DNA + ADP + H(+). It carries out the reaction a 5'-end dephospho-ribonucleoside-RNA + ATP = a 5'-end 5'-phospho-ribonucleoside-RNA + ADP + H(+). In terms of biological role, polynucleotide kinase that can phosphorylate the 5'-hydroxyl groups of both single-stranded RNA (ssRNA) and single-stranded DNA (ssDNA). Exhibits a strong preference for ssRNA. This chain is Polyribonucleotide 5'-hydroxyl-kinase MJ1315, found in Methanocaldococcus jannaschii (strain ATCC 43067 / DSM 2661 / JAL-1 / JCM 10045 / NBRC 100440) (Methanococcus jannaschii).